Here is an 829-residue protein sequence, read N- to C-terminus: Periplasmic nitrate reductase (829 aa).

Positions Met-1–Glu-30 are cleaved as a signal peptide. In terms of domain architecture, 4Fe-4S Mo/W bis-MGD-type spans Leu-36 to Asp-92. Residues Cys-43, Cys-46, Cys-50, and Cys-78 each coordinate [4Fe-4S] cluster. Mo-bis(molybdopterin guanine dinucleotide) is bound by residues Lys-80, Gln-147, Asn-172, Cys-176, Trp-209 to Met-216, Ser-240 to His-244, Gln-259 to Asp-261, Met-370, Gln-374, Asn-480, Ser-506 to Asp-507, Lys-529, Asp-556, and Thr-716 to Thr-725. Residue Phe-792 coordinates substrate. Asn-800 and Lys-817 together coordinate Mo-bis(molybdopterin guanine dinucleotide).

The protein belongs to the prokaryotic molybdopterin-containing oxidoreductase family. NasA/NapA/NarB subfamily. In terms of assembly, component of the periplasmic nitrate reductase NapAB complex composed of NapA and NapB. [4Fe-4S] cluster is required as a cofactor. It depends on Mo-bis(molybdopterin guanine dinucleotide) as a cofactor.

The protein resides in the periplasm. It catalyses the reaction 2 Fe(II)-[cytochrome] + nitrate + 2 H(+) = 2 Fe(III)-[cytochrome] + nitrite + H2O. Catalytic subunit of the periplasmic nitrate reductase complex NapAB. Receives electrons from NapB and catalyzes the reduction of nitrate to nitrite. In Pseudomonas aeruginosa (strain ATCC 15692 / DSM 22644 / CIP 104116 / JCM 14847 / LMG 12228 / 1C / PRS 101 / PAO1), this protein is Periplasmic nitrate reductase.